Here is a 687-residue protein sequence, read N- to C-terminus: Glycine--tRNA ligase beta subunit (687 aa).

Belongs to the class-II aminoacyl-tRNA synthetase family. Tetramer of two alpha and two beta subunits.

The protein resides in the cytoplasm. It catalyses the reaction tRNA(Gly) + glycine + ATP = glycyl-tRNA(Gly) + AMP + diphosphate. The protein is Glycine--tRNA ligase beta subunit of Neisseria meningitidis serogroup B (strain ATCC BAA-335 / MC58).